The chain runs to 947 residues: Protein translocase subunit SecA 1 (947 aa).

Residues Gln83, 101–105, and Asp490 contribute to the ATP site; that span reads GEGKT. The interval 860 to 947 is disordered; that stretch reads AKAQEQTGQG…KTSKPTRRRG (88 aa). Positions 925–934 are enriched in basic and acidic residues; sequence TRRERREAAR. The segment covering 935–947 has biased composition (basic residues); the sequence is KQAKTSKPTRRRG.

This sequence belongs to the SecA family. Monomer and homodimer. Part of the essential Sec protein translocation apparatus which comprises SecA, SecYEG and auxiliary proteins SecDF. Other proteins may also be involved.

The protein localises to the cell membrane. It localises to the cytoplasm. It catalyses the reaction ATP + H2O + cellular proteinSide 1 = ADP + phosphate + cellular proteinSide 2.. Part of the Sec protein translocase complex. Interacts with the SecYEG preprotein conducting channel. Has a central role in coupling the hydrolysis of ATP to the transfer of proteins into and across the cell membrane, serving as an ATP-driven molecular motor driving the stepwise translocation of polypeptide chains across the membrane. In Mycobacterium sp. (strain JLS), this protein is Protein translocase subunit SecA 1.